The following is a 188-amino-acid chain: Transcription factor E (188 aa).

The region spanning 9 to 98 (DLEVLRDVTL…SWRLNLREVL (90 aa)) is the HTH TFE/IIEalpha-type domain.

This sequence belongs to the TFE family. In terms of assembly, monomer. Interaction with RNA polymerase subunits RpoF and RpoE is necessary for Tfe stimulatory transcription activity. Able to interact with Tbp and RNA polymerase in the absence of DNA promoter. Interacts both with the preinitiation and elongation complexes.

Functionally, transcription factor that plays a role in the activation of archaeal genes transcribed by RNA polymerase. Facilitates transcription initiation by enhancing TATA-box recognition by TATA-box-binding protein (Tbp), and transcription factor B (Tfb) and RNA polymerase recruitment. Not absolutely required for transcription in vitro, but particularly important in cases where Tbp or Tfb function is not optimal. It dynamically alters the nucleic acid-binding properties of RNA polymerases by stabilizing the initiation complex and destabilizing elongation complexes. Seems to translocate with the RNA polymerase following initiation and acts by binding to the non template strand of the transcription bubble in elongation complexes. This is Transcription factor E from Methanopyrus kandleri (strain AV19 / DSM 6324 / JCM 9639 / NBRC 100938).